A 105-amino-acid chain; its full sequence is Large ribosomal subunit protein eL33 (105 aa).

This sequence belongs to the eukaryotic ribosomal protein eL33 family.

Functionally, the protein was found to bind to both initiator and elongator tRNAs and consequently was assigned to the P site or P and A site. This Dictyostelium discoideum (Social amoeba) protein is Large ribosomal subunit protein eL33 (rpl35a).